The following is a 401-amino-acid chain: Methionine import ATP-binding protein MetN (401 aa).

The 243-residue stretch at 6–248 folds into the ABC transporter domain; sequence ITFDHVVKEF…PQQPVTKRFI (243 aa). 45-52 is an ATP binding site; that stretch reads GYSGAGKS.

Belongs to the ABC transporter superfamily. Methionine importer (TC 3.A.1.24) family. As to quaternary structure, the complex is composed of two ATP-binding proteins (MetN), two transmembrane proteins (MetI) and a solute-binding protein (MetQ).

It is found in the cell membrane. It carries out the reaction L-methionine(out) + ATP + H2O = L-methionine(in) + ADP + phosphate + H(+). It catalyses the reaction D-methionine(out) + ATP + H2O = D-methionine(in) + ADP + phosphate + H(+). In terms of biological role, part of the ABC transporter complex MetNIQ involved in methionine import. Responsible for energy coupling to the transport system. The chain is Methionine import ATP-binding protein MetN from Bifidobacterium longum (strain NCC 2705).